Consider the following 430-residue polypeptide: Putative FBD-associated F-box protein At5g56440 (430 aa).

The F-box domain occupies 1-49 (MDRISLLPDDVVFKILSFVPTKVVVSTNLLSKRWRYLWKHVPKLDYRDP). The FBD domain occupies 349–399 (QWEQPSSVPKCLISSLETVEWIDYKGREVEKKVVMYLLENSRQLKTMAIRS).

This chain is Putative FBD-associated F-box protein At5g56440, found in Arabidopsis thaliana (Mouse-ear cress).